A 205-amino-acid polypeptide reads, in one-letter code: Small ribosomal subunit protein uS4 (205 aa).

The S4 RNA-binding domain occupies 94 to 154 (SRLDNSVYRA…TRKDGKIRKN (61 aa)).

Belongs to the universal ribosomal protein uS4 family. In terms of assembly, part of the 30S ribosomal subunit. Contacts protein S5. The interaction surface between S4 and S5 is involved in control of translational fidelity.

Functionally, one of the primary rRNA binding proteins, it binds directly to 16S rRNA where it nucleates assembly of the body of the 30S subunit. With S5 and S12 plays an important role in translational accuracy. The chain is Small ribosomal subunit protein uS4 from Mesomycoplasma hyopneumoniae (strain 232) (Mycoplasma hyopneumoniae).